Consider the following 354-residue polypeptide: S-adenosylmethionine:tRNA ribosyltransferase-isomerase (354 aa).

Belongs to the QueA family. In terms of assembly, monomer.

Its subcellular location is the cytoplasm. The catalysed reaction is 7-aminomethyl-7-carbaguanosine(34) in tRNA + S-adenosyl-L-methionine = epoxyqueuosine(34) in tRNA + adenine + L-methionine + 2 H(+). It participates in tRNA modification; tRNA-queuosine biosynthesis. Transfers and isomerizes the ribose moiety from AdoMet to the 7-aminomethyl group of 7-deazaguanine (preQ1-tRNA) to give epoxyqueuosine (oQ-tRNA). This Salmonella schwarzengrund (strain CVM19633) protein is S-adenosylmethionine:tRNA ribosyltransferase-isomerase.